The chain runs to 433 residues: MTKIVSIVGRPNVGKSTLFNRIIGYKKSIVNSKSGITRDRNYGFCNWNGIEFCLIDTGGYTNESKNIFDKKICEQFLFALAESDVILFLVDPSNDILGIDYDISKRIRKLKKSIYLVINKIDIYKNIYNTYKYCKFGITKTYCISSINGTGTEKLLDSIVSNFDKNIKIYKKNIPRIAIVGRPNVGKSTLINTLLNKNKNIVTNISGTTRDSIDVLYSKFGIECILVDTAGIRKKKNIKEDIEFYSVMRAIKSIQNSDVSLLIIDSKSGFESQDINIFKIIENNNKGIVLLINKWDIFNNNYLINSYENKIKKIIAPFNDVPIFFTSSFTKKDIIKSIKTAVKITFNLRLRIKTSLLNKIILPILNKNPHPSINGKLITIKYCSQIQTYNPQFIFFTNYPNNIKESYKRFIENNIREKFNFTGIPIKILFRLK.

2 EngA-type G domains span residues 3–167 (KIVS…DKNI) and 175–349 (PRIA…FNLR). Residues 9–16 (GRPNVGKS), 56–60 (DTGGY), 119–122 (NKID), 181–188 (GRPNVGKS), 228–232 (DTAGI), and 293–296 (NKWD) each bind GTP. One can recognise a KH-like domain in the interval 350–433 (LRIKTSLLNK…IPIKILFRLK (84 aa)).

This sequence belongs to the TRAFAC class TrmE-Era-EngA-EngB-Septin-like GTPase superfamily. EngA (Der) GTPase family. Associates with the 50S ribosomal subunit.

GTPase that plays an essential role in the late steps of ribosome biogenesis. This Karelsulcia muelleri (strain GWSS) (Sulcia muelleri) protein is GTPase Der.